The chain runs to 70 residues: MPRLPPILRLLQAPEKYTVIPKARISSKPAKSPTSAMDQAVGMSVIIAGFMVPAGWVLSHLESYKRSSAA.

The N-terminal 24 residues, 1 to 24 (MPRLPPILRLLQAPEKYTVIPKAR), are a transit peptide targeting the mitochondrion. The Mitochondrial matrix segment spans residues 25–35 (ISSKPAKSPTS). A helical transmembrane segment spans residues 36-59 (AMDQAVGMSVIIAGFMVPAGWVLS). The Mitochondrial intermembrane segment spans residues 60-70 (HLESYKRSSAA).

It belongs to the cytochrome c oxidase VIII family. As to quaternary structure, component of the cytochrome c oxidase (complex IV, CIV), a multisubunit enzyme composed of 14 subunits. The complex is composed of a catalytic core of 3 subunits MT-CO1, MT-CO2 and MT-CO3, encoded in the mitochondrial DNA, and 11 supernumerary subunits COX4I, COX5A, COX5B, COX6A, COX6B, COX6C, COX7A, COX7B, COX7C, COX8 and NDUFA4, which are encoded in the nuclear genome. The complex exists as a monomer or a dimer and forms supercomplexes (SCs) in the inner mitochondrial membrane with NADH-ubiquinone oxidoreductase (complex I, CI) and ubiquinol-cytochrome c oxidoreductase (cytochrome b-c1 complex, complex III, CIII), resulting in different assemblies (supercomplex SCI(1)III(2)IV(1) and megacomplex MCI(2)III(2)IV(2)).

It is found in the mitochondrion inner membrane. It participates in energy metabolism; oxidative phosphorylation. Functionally, component of the cytochrome c oxidase, the last enzyme in the mitochondrial electron transport chain which drives oxidative phosphorylation. The respiratory chain contains 3 multisubunit complexes succinate dehydrogenase (complex II, CII), ubiquinol-cytochrome c oxidoreductase (cytochrome b-c1 complex, complex III, CIII) and cytochrome c oxidase (complex IV, CIV), that cooperate to transfer electrons derived from NADH and succinate to molecular oxygen, creating an electrochemical gradient over the inner membrane that drives transmembrane transport and the ATP synthase. Cytochrome c oxidase is the component of the respiratory chain that catalyzes the reduction of oxygen to water. Electrons originating from reduced cytochrome c in the intermembrane space (IMS) are transferred via the dinuclear copper A center (CU(A)) of subunit 2 and heme A of subunit 1 to the active site in subunit 1, a binuclear center (BNC) formed by heme A3 and copper B (CU(B)). The BNC reduces molecular oxygen to 2 water molecules using 4 electrons from cytochrome c in the IMS and 4 protons from the mitochondrial matrix. The polypeptide is Cytochrome c oxidase subunit 8B, mitochondrial (Cox8b) (Rattus norvegicus (Rat)).